The sequence spans 660 residues: Zeaxanthin epoxidase, chloroplastic (660 aa).

The N-terminal 49 residues, 1 to 49, are a transit peptide targeting the chloroplast; the sequence is MYASSARDGIPGKWCNARRKQLPLLISKDFPAELYHSLPCKSLENGHIK. Residues 79 to 107 and 357 to 370 each bind FAD; these read KVLVAGGGIGGLVFALAGKKRGFDVLVFE and TFSWGKGRVTLLGD. One can recognise an FHA domain in the interval 545 to 609; that stretch reads LVLSRDENMP…HGTWFIDNEG (65 aa).

Requires FAD as cofactor.

The protein localises to the plastid. The protein resides in the chloroplast membrane. Its subcellular location is the chloroplast thylakoid membrane. It catalyses the reaction all-trans-zeaxanthin + 4 reduced [2Fe-2S]-[ferredoxin] + 2 O2 + 4 H(+) = all-trans-violaxanthin + 4 oxidized [2Fe-2S]-[ferredoxin] + 2 H2O. The catalysed reaction is all-trans-zeaxanthin + 2 reduced [2Fe-2S]-[ferredoxin] + O2 + 2 H(+) = all-trans-antheraxanthin + 2 oxidized [2Fe-2S]-[ferredoxin] + H2O. It carries out the reaction all-trans-antheraxanthin + 2 reduced [2Fe-2S]-[ferredoxin] + O2 + 2 H(+) = all-trans-violaxanthin + 2 oxidized [2Fe-2S]-[ferredoxin] + H2O. The enzyme catalyses beta-cryptoxanthin + 2 reduced [2Fe-2S]-[ferredoxin] + O2 + 2 H(+) = (5R,6S)-5,6-epoxi-beta-cryptoxanthin + 2 oxidized [2Fe-2S]-[ferredoxin] + H2O. It functions in the pathway plant hormone biosynthesis; abscisate biosynthesis. Functionally, converts zeaxanthin into antheraxanthin and subsequently violaxanthin. Also acts on beta-cryptoxanthin. Involved in the epoxidation of zeaxanthin. This is Zeaxanthin epoxidase, chloroplastic from Capsicum annuum (Capsicum pepper).